The primary structure comprises 356 residues: Tyrosine recombinase XerS (356 aa).

The Core-binding (CB) domain occupies L16–T121. In terms of domain architecture, Tyr recombinase spans G169–D354. Active-site residues include R210, K234, H306, R309, and H332. Residue Y341 is the O-(3'-phospho-DNA)-tyrosine intermediate of the active site.

It belongs to the 'phage' integrase family. XerS subfamily.

It localises to the cytoplasm. With respect to regulation, ftsK is required for recombination. Functionally, site-specific tyrosine recombinase, which acts by catalyzing the cutting and rejoining of the recombining DNA molecules. Essential to convert dimers of the bacterial chromosome into monomers to permit their segregation at cell division. This chain is Tyrosine recombinase XerS, found in Streptococcus pneumoniae serotype 4 (strain ATCC BAA-334 / TIGR4).